The chain runs to 351 residues: Transaldolase (351 aa).

Residue lysine 138 is the Schiff-base intermediate with substrate of the active site.

This sequence belongs to the transaldolase family. Type 2 subfamily.

The protein resides in the cytoplasm. The catalysed reaction is D-sedoheptulose 7-phosphate + D-glyceraldehyde 3-phosphate = D-erythrose 4-phosphate + beta-D-fructose 6-phosphate. Its pathway is carbohydrate degradation; pentose phosphate pathway; D-glyceraldehyde 3-phosphate and beta-D-fructose 6-phosphate from D-ribose 5-phosphate and D-xylulose 5-phosphate (non-oxidative stage): step 2/3. Its function is as follows. Transaldolase is important for the balance of metabolites in the pentose-phosphate pathway. The chain is Transaldolase (tal) from Neisseria meningitidis serogroup A / serotype 4A (strain DSM 15465 / Z2491).